The following is a 304-amino-acid chain: Aspartate carbamoyltransferase catalytic subunit (304 aa).

Residues Arg-57 and Thr-58 each contribute to the carbamoyl phosphate site. Residue Lys-85 participates in L-aspartate binding. Carbamoyl phosphate is bound by residues Arg-107, His-134, and Gln-137. L-aspartate contacts are provided by Arg-167 and Arg-216. Residues Ala-260 and Pro-261 each contribute to the carbamoyl phosphate site.

This sequence belongs to the aspartate/ornithine carbamoyltransferase superfamily. ATCase family. As to quaternary structure, heterododecamer (2C3:3R2) of six catalytic PyrB chains organized as two trimers (C3), and six regulatory PyrI chains organized as three dimers (R2).

It catalyses the reaction carbamoyl phosphate + L-aspartate = N-carbamoyl-L-aspartate + phosphate + H(+). It functions in the pathway pyrimidine metabolism; UMP biosynthesis via de novo pathway; (S)-dihydroorotate from bicarbonate: step 2/3. Functionally, catalyzes the condensation of carbamoyl phosphate and aspartate to form carbamoyl aspartate and inorganic phosphate, the committed step in the de novo pyrimidine nucleotide biosynthesis pathway. The chain is Aspartate carbamoyltransferase catalytic subunit from Fusobacterium nucleatum subsp. nucleatum (strain ATCC 25586 / DSM 15643 / BCRC 10681 / CIP 101130 / JCM 8532 / KCTC 2640 / LMG 13131 / VPI 4355).